Here is a 2492-residue protein sequence, read N- to C-terminus: Polyketide synthase 19 (2492 aa).

A Ketosynthase family 3 (KS3) domain is found at 12-463 (REPIAIVGTS…GTNAHAIVES (452 aa)). Active-site for beta-ketoacyl synthase activity residues include cysteine 202, histidine 341, and histidine 383. Positions 571–866 (VFTGQGAQWA…LEVGPHPALK (296 aa)) are malonyl-CoA:ACP transacylase (MAT) domain. Residues 967 to 1110 (HELLGRSVSH…GRIRLWLEQP (144 aa)) form an N-terminal hotdog fold region. The segment at 967-1270 (HELLGRSVSH…GVQMTAIGKP (304 aa)) is dehydratase (DH) domain. The region spanning 967–1273 (HELLGRSVSH…MTAIGKPPDR (307 aa)) is the PKS/mFAS DH domain. Catalysis depends on histidine 1001, which acts as the Proton acceptor; for dehydratase activity. The segment at 1125-1273 (MSELNMAQVY…MTAIGKPPDR (149 aa)) is C-terminal hotdog fold. Aspartate 1183 (proton donor; for dehydratase activity) is an active-site residue. A C-methyltransferase (CMeT) domain region spans residues 1431 to 1604 (LGAIVKQLGH…KTTGFSGVDI (174 aa)). Residues 2118–2293 (SYLLFGMTGD…AGSIVHISVL (176 aa)) form a ketoreductase (KR) domain region. In terms of domain architecture, Carrier spans 2404 to 2479 (PILEKRFAQA…RVCDDVLVDW (76 aa)). O-(pantetheine 4'-phosphoryl)serine is present on serine 2438.

In terms of biological role, highly reducing polyketide synthase; part of the gene cluster that mediates the biosynthesis of fujikurins A-D, secondary metabolites playing a role during rice infection. The polyketide synthase PKS19 acts with the trans-enoyl reductase FFUJ_12240 and the polyketide transferase FFUJ_12241 to produce fujikurins, however, the biosynthesis pathway has not been identified yet. This Gibberella fujikuroi (strain CBS 195.34 / IMI 58289 / NRRL A-6831) (Bakanae and foot rot disease fungus) protein is Polyketide synthase 19.